The primary structure comprises 851 residues: Beta-galactosidase 3 (851 aa).

The signal sequence occupies residues 1–29; that stretch reads MAGASSYFSLRRLLLLLLPLVPLLGATTA. The N-linked (GlcNAc...) asparagine glycan is linked to Asn35. Glu194 acts as the Proton donor in catalysis. Glu263 (nucleophile) is an active-site residue. N-linked (GlcNAc...) asparagine glycosylation is found at Asn361, Asn475, Asn528, and Asn533. Positions 765 to 851 constitute an SUEL-type lectin domain; sequence GRDAAKVQLS…KTLAIEADCS (87 aa).

The protein belongs to the glycosyl hydrolase 35 family.

It is found in the secreted. It localises to the extracellular space. Its subcellular location is the apoplast. The enzyme catalyses Hydrolysis of terminal non-reducing beta-D-galactose residues in beta-D-galactosides.. This chain is Beta-galactosidase 3, found in Oryza sativa subsp. japonica (Rice).